The chain runs to 368 residues: Type 2 DNA topoisomerase 6 subunit A (368 aa).

The Topo IIA-type catalytic domain occupies 9–148 (TEDEIARERL…FHMRPEESGA (140 aa)). The active-site O-(5'-phospho-DNA)-tyrosine intermediate is the Tyr-103. The Mg(2+) site is built by Glu-201 and Asp-253.

The protein belongs to the TOP6A family. Homodimer. Heterotetramer of two Top6A and two Top6B chains. The cofactor is Mg(2+).

The enzyme catalyses ATP-dependent breakage, passage and rejoining of double-stranded DNA.. In terms of biological role, relaxes both positive and negative superturns and exhibits a strong decatenase activity. This is Type 2 DNA topoisomerase 6 subunit A from Natronomonas pharaonis (strain ATCC 35678 / DSM 2160 / CIP 103997 / JCM 8858 / NBRC 14720 / NCIMB 2260 / Gabara) (Halobacterium pharaonis).